We begin with the raw amino-acid sequence, 505 residues long: DNA repair protein RadA (505 aa).

A C4-type zinc finger spans residues 10 to 27 (CSACGADHAQWFGRCPKC). 107–114 (GDPGIGKS) contacts ATP. The short motif at 281–285 (KNRFG) is the RadA KNRFG motif element. The tract at residues 380–505 (DAYLSVAGGL…KIEEDLGKKD (126 aa)) is lon-protease-like. The tract at residues 485-505 (NTTDQGNGSEAKIEEDLGKKD) is disordered. The span at 495–505 (AKIEEDLGKKD) shows a compositional bias: basic and acidic residues.

It belongs to the RecA family. RadA subfamily.

Functionally, DNA-dependent ATPase involved in processing of recombination intermediates, plays a role in repairing DNA breaks. Stimulates the branch migration of RecA-mediated strand transfer reactions, allowing the 3' invading strand to extend heteroduplex DNA faster. Binds ssDNA in the presence of ADP but not other nucleotides, has ATPase activity that is stimulated by ssDNA and various branched DNA structures, but inhibited by SSB. Does not have RecA's homology-searching function. This chain is DNA repair protein RadA, found in Synechocystis sp. (strain ATCC 27184 / PCC 6803 / Kazusa).